The sequence spans 418 residues: Pyruvate kinase isozyme G, chloroplastic (418 aa).

K(+) contacts are provided by Asp14 and Thr15. Arg21 is a binding site for ATP. Glu165 serves as a coordination point for Mg(2+). Gly188, Asp189, and Thr221 together coordinate substrate. Asp189 serves as a coordination point for Mg(2+).

The protein belongs to the pyruvate kinase family. The cofactor is Mg(2+). K(+) serves as cofactor. As to expression, expressed in developing and germinating endosperm and in roots.

It is found in the plastid. Its subcellular location is the chloroplast. It carries out the reaction pyruvate + ATP = phosphoenolpyruvate + ADP + H(+). It functions in the pathway carbohydrate degradation; glycolysis; pyruvate from D-glyceraldehyde 3-phosphate: step 5/5. In Ricinus communis (Castor bean), this protein is Pyruvate kinase isozyme G, chloroplastic.